The chain runs to 225 residues: UPF0758 protein Mhun_2739 (225 aa).

Positions 102 to 225 (RITEPDHILK…VTSLRSLGYL (124 aa)) constitute an MPN domain. The Zn(2+) site is built by His174, His176, and Asp187. The JAMM motif signature appears at 174 to 187 (HNHPSGNPEPSSED).

It belongs to the UPF0758 family.

This is UPF0758 protein Mhun_2739 from Methanospirillum hungatei JF-1 (strain ATCC 27890 / DSM 864 / NBRC 100397 / JF-1).